Consider the following 529-residue polypeptide: Lysine--tRNA ligase (529 aa).

Residues 29–37 (ISGSVHIGN) carry the 'HIGH' region motif. The 'KMSKS' region signature appears at 274–278 (AMSKS). Lys-277 lines the ATP pocket.

This sequence belongs to the class-I aminoacyl-tRNA synthetase family.

It localises to the cytoplasm. The enzyme catalyses tRNA(Lys) + L-lysine + ATP = L-lysyl-tRNA(Lys) + AMP + diphosphate. The sequence is that of Lysine--tRNA ligase from Methanosphaera stadtmanae (strain ATCC 43021 / DSM 3091 / JCM 11832 / MCB-3).